Here is a 248-residue protein sequence, read N- to C-terminus: Probable transcriptional regulatory protein Pcar_2335 (248 aa).

Belongs to the TACO1 family.

The protein localises to the cytoplasm. The sequence is that of Probable transcriptional regulatory protein Pcar_2335 from Syntrophotalea carbinolica (strain DSM 2380 / NBRC 103641 / GraBd1) (Pelobacter carbinolicus).